Here is a 200-residue protein sequence, read N- to C-terminus: UPF0301 protein BR0480/BS1330_I0481 (200 aa).

It belongs to the UPF0301 (AlgH) family.

This Brucella suis biovar 1 (strain 1330) protein is UPF0301 protein BR0480/BS1330_I0481.